Reading from the N-terminus, the 172-residue chain is Shikimate kinase (172 aa).

Residue 14–19 (GAGKST) participates in ATP binding. Residue Ser-18 participates in Mg(2+) binding. Positions 36, 60, and 82 each coordinate substrate. Arg-120 provides a ligand contact to ATP. Arg-139 contributes to the substrate binding site. Gln-156 is an ATP binding site.

This sequence belongs to the shikimate kinase family. In terms of assembly, monomer. Mg(2+) serves as cofactor.

The protein resides in the cytoplasm. The catalysed reaction is shikimate + ATP = 3-phosphoshikimate + ADP + H(+). It participates in metabolic intermediate biosynthesis; chorismate biosynthesis; chorismate from D-erythrose 4-phosphate and phosphoenolpyruvate: step 5/7. Its function is as follows. Catalyzes the specific phosphorylation of the 3-hydroxyl group of shikimic acid using ATP as a cosubstrate. In Vibrio campbellii (strain ATCC BAA-1116), this protein is Shikimate kinase.